Here is a 475-residue protein sequence, read N- to C-terminus: MNFETVIGLEVHVELKTNSKIFSPAPAHFGAEPNTNTTVIDLGYPGVLPVLNKNVVDFAMRAALALNMEIEQETKFDRKNYFYPDNPKAYQISQFDKPIGKNGWIDIEVDGYTKRIGITRLHMEEDAGKLSHAGDHSLVDFNRQGTPLVEIVSEPDIRTPNEAYAYLEKLKSIIQYTDVSDCKMEEGSLRCDANISIRPYGQEEFGTKTELKNLNSFNYVRRGLEHEELRQADVLLSGGVIEQETRRFDEKTGKTILMRVKEGTDDYRYFPEPDLVRLSIDDAWLERVKSEIPELPDARKKRYVEELGLTPYDAGVLVISKEISDFFESMIVNGADAKLSANWLMGDVSAYLNAEQKDLKDTALTPENLAEMVKLITDGTISSKIGKKVFAELVENGGSAQEIVKAKGLVQISDEGALLAIVTEVLDNNAQSIEDFKNGKDRAIGFLVGQIMKATKGQANPPMVNKLLQQEIAKR.

The protein belongs to the GatB/GatE family. GatB subfamily. In terms of assembly, heterotrimer of A, B and C subunits.

It catalyses the reaction L-glutamyl-tRNA(Gln) + L-glutamine + ATP + H2O = L-glutaminyl-tRNA(Gln) + L-glutamate + ADP + phosphate + H(+). It carries out the reaction L-aspartyl-tRNA(Asn) + L-glutamine + ATP + H2O = L-asparaginyl-tRNA(Asn) + L-glutamate + ADP + phosphate + 2 H(+). Functionally, allows the formation of correctly charged Asn-tRNA(Asn) or Gln-tRNA(Gln) through the transamidation of misacylated Asp-tRNA(Asn) or Glu-tRNA(Gln) in organisms which lack either or both of asparaginyl-tRNA or glutaminyl-tRNA synthetases. The reaction takes place in the presence of glutamine and ATP through an activated phospho-Asp-tRNA(Asn) or phospho-Glu-tRNA(Gln). In Lysinibacillus sphaericus (strain C3-41), this protein is Aspartyl/glutamyl-tRNA(Asn/Gln) amidotransferase subunit B.